We begin with the raw amino-acid sequence, 538 residues long: Syncytin-2 (538 aa).

A signal peptide spans Met1 to Ala15. At Ala16–Lys478 the chain is on the extracellular side. Residues Cys43–Cys46 carry the CXXC motif. 3 disulfide bridges follow: Cys43/Cys46, Cys43/Cys439, and Cys431/Cys438. Residues Asn146, Asn177, Asn220, Asn241, Asn247, Asn312, and Asn332 are each glycosylated (N-linked (GlcNAc...) asparagine). Residues Leu354–Ile374 are fusion peptide. The short motif at Leu414–Ile430 is the CKS-17 element. Positions Cys431 to Cys439 match the CX6CC motif. Asn443 carries N-linked (GlcNAc...) asparagine glycosylation. A helical membrane pass occupies residues Trp479–Phe499. The Cytoplasmic portion of the chain corresponds to Gly500–Phe538.

The protein belongs to the gamma type-C retroviral envelope protein family. HERV class-I FRD env subfamily. The surface and transmembrane proteins form a heterodimer. They are attached by non-covalent interactions or by a labile interchain disulfide bond. Specific enzymatic cleavages in vivo yield the mature SU and TM proteins. In terms of processing, the CXXC motif is highly conserved across a broad range of retroviral envelope proteins. It is thought to participate in the formation of a labile disulfide bond possibly with the CX6CC motif present in the transmembrane protein.

The protein localises to the virion. It is found in the cell membrane. This endogenous retroviral envelope protein has retained its original fusogenic properties and participates in trophoblast fusion and the formation of a syncytium during placenta morphogenesis. The interaction with MFSD2A is apparently important for this process. Functionally, endogenous envelope proteins may have kept, lost or modified their original function during evolution but this one can still make pseudotypes with MLV, HIV-1 or SIV-1 virions and confer infectivity. Retroviral envelope proteins mediate receptor recognition and membrane fusion during early infection. The surface protein mediates receptor recognition, while the transmembrane protein anchors the envelope heterodimer to the viral membrane through one transmembrane domain. The other hydrophobic domain, called fusion peptide, mediates fusion of the viral membrane with the target cell membrane. This Callithrix jacchus (White-tufted-ear marmoset) protein is Syncytin-2 (ERVFRD-1).